We begin with the raw amino-acid sequence, 334 residues long: N-acetyl-S-alkylcysteine monooxygenase (334 aa).

This sequence to bacterial alkanal monooxygenase alpha and beta chains.

The enzyme catalyses N-acetyl-S-benzyl-L-cysteine + FMNH2 + O2 = (R)-N-acetyl-S-benzyl-L-cysteine sulfoxide + FMN + H2O + H(+). It carries out the reaction N-acetyl-S-methyl-L-cysteine + FMNH2 + O2 = (R)-N-acetyl-S-methyl-L-cysteine sulfoxide + FMN + H2O + H(+). The protein operates within amino-acid metabolism. Involved in a cysteine salvage pathway from S-alkylcysteine. Catalyzes the oxidation of N-acetyl-S-benzyl-L-cysteine and N-acetyl-S-methyl-L-cysteine to (R)-N-acetyl-S-benzyl-L-cysteine sulfoxide and (R)-N-acetyl-S-methyl-L-cysteine sulfoxide, respectively. This pathway is likely important in the catabolism of alkylated cysteine generated by proteolysis of alkylated glutathione formed in the detoxification of a wide range of electrophiles. This is N-acetyl-S-alkylcysteine monooxygenase from Bacillus subtilis (strain 168).